We begin with the raw amino-acid sequence, 242 residues long: 1-(5-phosphoribosyl)-5-[(5-phosphoribosylamino)methylideneamino] imidazole-4-carboxamide isomerase (242 aa).

Aspartate 8 functions as the Proton acceptor in the catalytic mechanism. Catalysis depends on aspartate 129, which acts as the Proton donor.

The protein belongs to the HisA/HisF family.

It is found in the cytoplasm. It catalyses the reaction 1-(5-phospho-beta-D-ribosyl)-5-[(5-phospho-beta-D-ribosylamino)methylideneamino]imidazole-4-carboxamide = 5-[(5-phospho-1-deoxy-D-ribulos-1-ylimino)methylamino]-1-(5-phospho-beta-D-ribosyl)imidazole-4-carboxamide. It functions in the pathway amino-acid biosynthesis; L-histidine biosynthesis; L-histidine from 5-phospho-alpha-D-ribose 1-diphosphate: step 4/9. This is 1-(5-phosphoribosyl)-5-[(5-phosphoribosylamino)methylideneamino] imidazole-4-carboxamide isomerase from Clostridium botulinum (strain Okra / Type B1).